Reading from the N-terminus, the 312-residue chain is Iron/alpha-ketoglutarate-dependent dioxygenase penM (312 aa).

Fe cation-binding residues include H134, D136, and H211. The disordered stretch occupies residues 287 to 312 (LGLKSEQPLPDGMEKGSMQETDIGGQ).

This sequence belongs to the PhyH family. As to quaternary structure, homodimer. Fe cation serves as cofactor.

The catalysed reaction is (-)-cyclopeptine + 2-oxoglutarate + O2 = (Z)-dehydrocyclopeptine + succinate + CO2 + H2O. It catalyses the reaction (Z)-dehydrocyclopeptine + 2-oxoglutarate + O2 = (-)-cyclopenine + succinate + CO2. The enzyme catalyses (-)-4'-methoxycyclopeptine + 2-oxoglutarate + O2 = (Z)-4'-methoxydehydrocyclopeptine + succinate + CO2 + H2O. It carries out the reaction (Z)-4'-methoxydehydrocyclopeptine + 2-oxoglutarate + O2 = (-)-4'-methoxycyclopenine + succinate + CO2. It participates in secondary metabolite biosynthesis. It functions in the pathway alkaloid biosynthesis. Its pathway is mycotoxin biosynthesis. Functionally, iron/alpha-ketoglutarate-dependent dioxygenase; part of the gene cluster that mediates the biosynthesis of penigequinolones, potent insecticidal alkaloids that contain a highly modified 10-carbon prenyl group. The first stage is catalyzed by the nonribosomal peptide synthetase penN that condenses anthranilic acid and O-methyl-L-tyrosine to produce 4'-methoxycyclopeptin. 4'-methoxycyclopeptin is then converted to 4'-methoxydehydrocyclopeptin by the ketoglutarate-dependent dioxygenase penM through dehydrogenation to form a double bond between C-alpha and C-beta of the O-methyltyrosine side chain. PenM also converts its first product methoxydehydrocyclopeptin to 4'-methoxycyclopenin. The following conversion of 4'methoxycyclopenin into 4'-methoxyviridicatin is catalyzed by the cyclopenase penL. 4'-methoxyviridicatin is the precursor of quinolone natural products, and is further converted to quinolinone B. The prenyltransferase penI then catalyzes the canonical Friedel-Crafts alkylation of quinolinone B with dimethylallyl cation to yield dimethylallyl quinolone, which is subjected to FAD-dependent dehydrogenation by the FAD-linked oxidoreductase penH to yield conjugated aryl diene. The delta(3') double bond then serves as the site of the second alkylation with DMAPP catalyzed by the prenyltransferase penG to yield a carbenium ion intermediate, which can be attacked by H(2)O to yield a styrenyl quinolone containing a C3'-hydroxyprenyl chain, or undergo cyclization to yield yaequinolones J1 and J2. The conversion of the styrenyl quinolone into the tetrahydrofuran-containing yaequinolone C is performed by the FAD-dependent monooxygenase penE and involves epoxidation of the terminal C7'-C8' olefin, followed by epoxide ring opening initiated by the C3' hydroxyl group. The predicted cysteine hydrolase penJ acts as an epoxide hydrolase that enhances the rate of the 5-exo-tet cyclization step, increasing the yield of yaequinolone C. PenF catalyzes the cationic rearrangement of the epoxide formed by penE (before ring opening to produce yaequinolone C) into yaequinolone D. Finally, the short-chain dehydrogenase/reductase (SDR)-like reductase penD, catalyzes both the dehydration of yaequinolone D and the reduction of the resulting oxonium to yield penigequinolone. In Penicillium thymicola, this protein is Iron/alpha-ketoglutarate-dependent dioxygenase penM.